A 399-amino-acid chain; its full sequence is Na(+)/H(+) antiporter NhaA (399 aa).

Helical transmembrane passes span 14 to 34 (AGGILLMIAVALAMIMANSPL), 59 to 79 (LIHWINDGLMALFFMLIGLEV), 95 to 115 (SLPTFAAVGGMVFPAGIYLLF), 124 to 144 (AGWAIPAATDIAFALGVMALL), 154 to 174 (VFLLALAIIDDLGVVVIIAMF), 177 to 197 (TDLSMLSLIVAGIAILGLVGL), 213 to 233 (LILWIAVLKSGVHATLAGVII), 261 to 281 (FIILPIFAFANAGVDLSPMSF), 290 to 310 (VGIALGLLLGKPLGVLVFSYI), 331 to 351 (VALMCGIGFTMSMFISSLAFV), and 363 to 383 (LGILVGSFASAIIGYFWLAKV).

It belongs to the NhaA Na(+)/H(+) (TC 2.A.33) antiporter family.

The protein localises to the cell inner membrane. The enzyme catalyses Na(+)(in) + 2 H(+)(out) = Na(+)(out) + 2 H(+)(in). Na(+)/H(+) antiporter that extrudes sodium in exchange for external protons. This is Na(+)/H(+) antiporter NhaA from Shewanella sediminis (strain HAW-EB3).